The chain runs to 221 residues: D-glycero-alpha-D-manno-heptose 1-phosphate guanylyltransferase (221 aa).

It belongs to the D-alpha-D-heptose-1-P guanylyltransferase family.

It carries out the reaction D-glycero-alpha-D-manno-heptose 1-phosphate + GTP + H(+) = GDP-D-glycero-alpha-D-manno-heptose + diphosphate. Its pathway is nucleotide-sugar biosynthesis; GDP-D-glycero-alpha-D-manno-heptose biosynthesis; GDP-D-glycero-alpha-D-manno-heptose from D-glycero-alpha-D-manno-heptose 7-phosphate: step 3/3. The protein operates within capsule biogenesis; capsule polysaccharide biosynthesis. In terms of biological role, catalyzes the GDP transfer from GTP to D-glycero-alpha-D-manno-heptose 1-phosphate, yielding GDP-D-alpha-D-heptose. Is able to use ATP, CTP or UTP as substrate in the presence of pyrophosphatase, but at a significantly slower rate. Can also form GDP-alpha-D-mannose from alpha-D-mannose 1-phosphate and GTP. The sequence is that of D-glycero-alpha-D-manno-heptose 1-phosphate guanylyltransferase from Campylobacter jejuni subsp. jejuni serotype O:2 (strain ATCC 700819 / NCTC 11168).